A 141-amino-acid chain; its full sequence is Globin, extracellular monomeric (141 aa).

In terms of domain architecture, Globin spans 1-141 (ECDALQRFKV…LGVITGAIHD (141 aa)). Cysteines 2 and 131 form a disulfide. His-94 contributes to the heme b binding site.

The protein belongs to the globin family. In terms of assembly, the giant hemoglobins of worms are formed of a monomeric subunit and a disulfide-bonded trimer. This subunit is monomeric.

It localises to the secreted. In Tubifex tubifex (Sludge worm), this protein is Globin, extracellular monomeric.